The primary structure comprises 222 residues: RNA-binding protein KhpB (222 aa).

Residues 2-51 are jag_N domain; sequence DMVTVTAKTVEEAVTKALIELQTTSDKLTYEIVEKGSAGFLGIGSKPAII. The KH domain occupies 54–133; it reads KRKETLQDKA…KSSSDYIRVK (80 aa). Positions 138–204 constitute an R3H domain; it reads NYRERRKETL…EEPFRHVIIS (67 aa).

This sequence belongs to the KhpB RNA-binding protein family. Forms a complex with KhpA. Homodimer or homotrimer.

The protein localises to the cytoplasm. Its function is as follows. A probable RNA chaperone. Forms a complex with KhpA which binds to cellular RNA and controls its expression. Plays a role in peptidoglycan (PG) homeostasis and cell length regulation. The polypeptide is RNA-binding protein KhpB (Clostridium symbiosum (Bacteroides symbiosus)).